Consider the following 99-residue polypeptide: Putative type 4B encapsulin shell protein PF1875 (99 aa).

The protein belongs to the encapsulin family. Family 4B subfamily. May self-assemble into facets and potentially into larger complexes.

It is found in the encapsulin nanocompartment. Functionally, may be the encapsulin shell protein in a type 4 A-domain encapsulin nanocompartment system. Its cargo may be upstream glyceraldehyde-3-phosphate dehydrogenase (AC P61879). The chain is Putative type 4B encapsulin shell protein PF1875 from Pyrococcus furiosus (strain ATCC 43587 / DSM 3638 / JCM 8422 / Vc1).